Here is a 349-residue protein sequence, read N- to C-terminus: Putative nuclease HARBI1 (349 aa).

Residues Asp149, Asp199, Asp225, and Glu261 each contribute to the a divalent metal cation site. Residues 149-300 enclose the DDE Tnp4 domain; it reads DCIHVAIKAP…IILACCVLHN (152 aa).

It belongs to the HARBI1 family. Interacts with NAIF1. It depends on a divalent metal cation as a cofactor. In terms of tissue distribution, detected in adult brain, eye, nerve tissue and lung. Detected in embryo.

Its subcellular location is the nucleus. It is found in the cytoplasm. Its function is as follows. Transposase-derived protein that may have nuclease activity (Potential). Does not have transposase activity. In Mus musculus (Mouse), this protein is Putative nuclease HARBI1 (Harbi1).